The primary structure comprises 432 residues: Trigger factor (432 aa).

The 86-residue stretch at 161 to 246 folds into the PPIase FKBP-type domain; it reads EDRVTIDFTG…LKKVEERGLP (86 aa).

Belongs to the FKBP-type PPIase family. Tig subfamily.

Its subcellular location is the cytoplasm. The catalysed reaction is [protein]-peptidylproline (omega=180) = [protein]-peptidylproline (omega=0). Involved in protein export. Acts as a chaperone by maintaining the newly synthesized protein in an open conformation. Functions as a peptidyl-prolyl cis-trans isomerase. The chain is Trigger factor from Salmonella choleraesuis (strain SC-B67).